Reading from the N-terminus, the 101-residue chain is NADH-quinone oxidoreductase subunit K (101 aa).

3 helical membrane-spanning segments follow: residues 4–24, 29–49, and 61–81; these read VYDYLVLGVILFGLSLVGIML, IILLLVCVELMLLAVNTNFIA, and VFVFFILTVAAAEAAIGLAIV.

It belongs to the complex I subunit 4L family. In terms of assembly, NDH-1 is composed of 14 different subunits. Subunits NuoA, H, J, K, L, M, N constitute the membrane sector of the complex.

The protein resides in the cell inner membrane. It carries out the reaction a quinone + NADH + 5 H(+)(in) = a quinol + NAD(+) + 4 H(+)(out). NDH-1 shuttles electrons from NADH, via FMN and iron-sulfur (Fe-S) centers, to quinones in the respiratory chain. The immediate electron acceptor for the enzyme in this species is believed to be ubiquinone. Couples the redox reaction to proton translocation (for every two electrons transferred, four hydrogen ions are translocated across the cytoplasmic membrane), and thus conserves the redox energy in a proton gradient. This Legionella pneumophila (strain Paris) protein is NADH-quinone oxidoreductase subunit K.